Reading from the N-terminus, the 306-residue chain is MNKIKCALIGPGNIGTDLLYKLKRSPVLEPVWMVGIDAASEGLARARELGLKTTADGVDGLLPHVKADGVQIAFDATSAYVHAENSRKLNELGVLMIDLTPAAIGPFCVPPVNLKDHVGRGEMNVNMVTCGGQATIPMVAAVSRVQPVKYGEIVATVSSKSAGPGTRKNIDEFTRTTAGAVEKVGGAKVGKAIIILNPAEPPLIMRDTVHCLTETEPDQQKITESIHAMIREVQKYVPGYKLVNGPVFDGNRVSIYLEVEGLGDYLPKYAGNLDIMTAAGARTAEMFAEEILAGRLTLESNRAVLA.

The active-site Acyl-thioester intermediate is the cysteine 130. NAD(+)-binding positions include 161 to 169 (SAGPGTRKN) and asparagine 272.

Belongs to the acetaldehyde dehydrogenase family.

It carries out the reaction acetaldehyde + NAD(+) + CoA = acetyl-CoA + NADH + H(+). The chain is Acetaldehyde dehydrogenase 2/3 (mhpF) from Azoarcus sp. (strain BH72).